Consider the following 435-residue polypeptide: 5-methylthioadenosine/S-adenosylhomocysteine deaminase (435 aa).

2 residues coordinate Zn(2+): histidine 65 and histidine 67. Glutamate 94, arginine 150, and histidine 189 together coordinate substrate. Histidine 216 serves as a coordination point for Zn(2+). Substrate is bound by residues glutamate 219 and aspartate 304. A Zn(2+)-binding site is contributed by aspartate 304.

It belongs to the metallo-dependent hydrolases superfamily. MTA/SAH deaminase family. Zn(2+) is required as a cofactor.

It carries out the reaction S-adenosyl-L-homocysteine + H2O + H(+) = S-inosyl-L-homocysteine + NH4(+). The enzyme catalyses S-methyl-5'-thioadenosine + H2O + H(+) = S-methyl-5'-thioinosine + NH4(+). Catalyzes the deamination of 5-methylthioadenosine and S-adenosyl-L-homocysteine into 5-methylthioinosine and S-inosyl-L-homocysteine, respectively. Is also able to deaminate adenosine. The sequence is that of 5-methylthioadenosine/S-adenosylhomocysteine deaminase from Bacillus cereus (strain ATCC 10987 / NRS 248).